A 397-amino-acid polypeptide reads, in one-letter code: Protein WRKY1 (397 aa).

Positions 326-392 (KVADIPADEF…YEGDHNHNRV (67 aa)) form a DNA-binding region, WRKY.

Belongs to the WRKY group II-d family. In terms of assembly, interacts with RS2. In terms of tissue distribution, more abundant in apices and young leaf primordia than in fully expanded leaf tissues.

The protein resides in the nucleus. In terms of biological role, transcription factor. Interacts specifically with the W box (5'-(T)TGAC[CT]-3'), a frequently occurring elicitor-responsive cis-acting element. This Zea mays (Maize) protein is Protein WRKY1.